A 731-amino-acid polypeptide reads, in one-letter code: Radial spoke head 10 homolog B (731 aa).

Positions 1–69 (MARGDNMKSS…PNENQPIGEH (69 aa)) are disordered. A compositionally biased stretch (polar residues) spans 7–17 (MKSSNKSTPEP). 2 stretches are compositionally biased toward low complexity: residues 18–36 (TLSKTLVESSTSSLLSESV) and 46–57 (SSSAVCSASTVS). MORN repeat units lie at residues 86–108 (YEGEKCGEMFHGEGVAYFQGGHV), 109–131 (YKGSFSHGLMHGYGEYIWSDGLK), 132–154 (YQGDFKVNVPMGHGTYTWLNGST), 155–177 (YEGEVHQGIRHGVGMYKCVKTLT), 179–201 (YRGQWYLGKRQGQGEMFYNQEAT), 204–226 (YKGEWVNNCREGWGKRCYPSGNV), 227–249 (YEGQWRNNVRHGEGTMRWIDLDQ), 251–273 (YSGQWINGIQEGKGTHTWFRKRA), 284–306 (YTGDFVQAMRHGQGQFLYASGAL), and 307–329 (YCGQWKYDKKHGQGRYIFENGRV). Disordered stretches follow at residues 353-377 (TTPFPDENDSSKGASQSSSNASPLG) and 709-731 (KQEQDADGNELCPVTTTSVTSIH). A compositionally biased stretch (low complexity) spans 363 to 377 (SKGASQSSSNASPLG). Residues 722–731 (VTTTSVTSIH) show a composition bias toward polar residues.

It is found in the cytoplasm. Its subcellular location is the cytoskeleton. It localises to the cilium axoneme. The protein localises to the cell projection. The protein resides in the cilium. It is found in the flagellum. Functionally, may function as part of axonemal radial spoke complexes. Radial spoke complexes are important for ciliary motility. The protein is Radial spoke head 10 homolog B (rsph10b) of Danio rerio (Zebrafish).